A 63-amino-acid chain; its full sequence is DNA-directed RNA polymerase 7 kDa subunit (63 aa).

This sequence belongs to the poxviridae DNA-directed RNA polymerase 7 kDa subunit family. As to quaternary structure, the DNA-dependent RNA polymerase used for intermediate and late genes expression consists of eight subunits 147 kDa, 133 kDa, 35 kDa, 30 kDa, 22 kDa, 19 kDa, 18 kDa and 7 kDa totalling more than 500 kDa in mass. The same holoenzyme, with the addition of the transcription-specificity factor RAP94, is used for early gene expression.

The protein localises to the virion. It catalyses the reaction RNA(n) + a ribonucleoside 5'-triphosphate = RNA(n+1) + diphosphate. In terms of biological role, part of the DNA-dependent RNA polymerase which catalyzes the transcription of viral DNA into RNA using the four ribonucleoside triphosphates as substrates. Responsible for the transcription of early, intermediate and late genes. DNA-dependent RNA polymerase associates with the early transcription factor (ETF) thereby allowing the early genes transcription. Late transcription, and probably also intermediate transcription, require newly synthesized RNA polymerase. The polypeptide is DNA-directed RNA polymerase 7 kDa subunit (RPO7) (Rabbit fibroma virus (strain Kasza) (RFV)).